Consider the following 189-residue polypeptide: Ion-translocating oxidoreductase complex subunit B (189 aa).

The hydrophobic stretch occupies residues 1-26 (MSQVIIAIILLGLLALAFGALLGYAA). The 59-residue stretch at 32–90 (EGDPIIDQAEALLPQTQCGQCGYPGCRPYAEAIANGEKINKCPPGGTATMEKLAELMGV) folds into the 4Fe-4S domain. [4Fe-4S] cluster contacts are provided by C49, C52, C57, C73, C114, C117, C120, C124, C144, C147, C150, and C154. 2 consecutive 4Fe-4S ferredoxin-type domains span residues 105–134 (KVAF…GTGK) and 135–164 (QMHT…MIPV).

This sequence belongs to the 4Fe4S bacterial-type ferredoxin family. RnfB subfamily. The complex is composed of six subunits: RnfA, RnfB, RnfC, RnfD, RnfE and RnfG. The cofactor is [4Fe-4S] cluster.

The protein resides in the cell inner membrane. Functionally, part of a membrane-bound complex that couples electron transfer with translocation of ions across the membrane. This Shewanella loihica (strain ATCC BAA-1088 / PV-4) protein is Ion-translocating oxidoreductase complex subunit B.